Consider the following 392-residue polypeptide: ACDNPEKFQYVEKSLSCAPRCSPGVDVYWSREDKDFAFVWMAVWSTLCFVSTAFTVLTFLLDPHRFQYPERPIIFLSMCYNVYSVAFIIRSVAGAETIACDRENGELYIIQEGLESTGCTIVFLILYYFGMASSLWWVVLTLTWFLAAGKKWGHEAIEAHSSYFHMAAWGIPAMKTIVILTMRKVAGDELTGLCYVGSMDVSALTGFVLIPLSCYLVVGTSFILTGFVALFHIRKIMKTGGTNTEKLEKLMVKIGVFSILYTVPATCVIVCYFYERLNVDYWNLRALERACVPLPGRRAADCSLEASVPTVAVFMLKIFMSLVVGITSGVWVWSSKTLQTWQSLCNRKLGVRTRGKPCSGVSCGGVHCHYKAPTVMLHMTKTDPYLDNPTHV.

Topologically, residues Ala-1 to Asp-35 are extracellular. Residues Phe-36–Val-56 traverse the membrane as a helical segment. The Cytoplasmic segment spans residues Leu-57–Pro-72. The helical transmembrane segment at Ile-73–Ala-93 threads the bilayer. Residues Gly-94 to Cys-119 are Extracellular-facing. A helical transmembrane segment spans residues Thr-120 to Leu-140. Residues Thr-141 to Ser-161 lie on the Cytoplasmic side of the membrane. Residues Ser-162–Met-182 traverse the membrane as a helical segment. The Extracellular segment spans residues Arg-183–Gly-206. The helical transmembrane segment at Phe-207–Phe-227 threads the bilayer. At Val-228–Lys-253 the chain is on the cytoplasmic side. A helical membrane pass occupies residues Ile-254–Tyr-274. Residues Glu-275–Ala-312 are Extracellular-facing. The helical transmembrane segment at Val-313–Trp-333 threads the bilayer. Residues Ser-334–Val-392 lie on the Cytoplasmic side of the membrane. Positions Lys-336–Trp-341 match the Lys-Thr-X-X-X-Trp motif, mediates interaction with the PDZ domain of Dvl family members motif. A PDZ-binding motif is present at residues Thr-390–Val-392.

It belongs to the G-protein coupled receptor Fz/Smo family.

Its subcellular location is the cell membrane. Its function is as follows. Receptor for WNT2 that is coupled to the beta-catenin canonical signaling pathway, which leads to the activation of disheveled proteins, inhibition of GSK-3 kinase, nuclear accumulation of beta-catenin and activation of Wnt target genes. This chain is Frizzled-9 (FZD9), found in Gallus gallus (Chicken).